A 205-amino-acid chain; its full sequence is Small ribosomal subunit protein uS5 (205 aa).

The 64-residue stretch at L49 to V112 folds into the S5 DRBM domain.

It belongs to the universal ribosomal protein uS5 family. In terms of assembly, part of the 30S ribosomal subunit. Contacts protein S4.

Its function is as follows. With S4 and S12 plays an important role in translational accuracy. In Methanospirillum hungatei JF-1 (strain ATCC 27890 / DSM 864 / NBRC 100397 / JF-1), this protein is Small ribosomal subunit protein uS5.